We begin with the raw amino-acid sequence, 398 residues long: O-methyltransferase hmp5 (398 aa).

Residues 233 to 234, Glu-261, and 283 to 284 each bind S-adenosyl-L-methionine; these read GG and DF. The active-site Proton acceptor is the His-303.

The protein belongs to the class I-like SAM-binding methyltransferase superfamily. Cation-independent O-methyltransferase family.

The protein operates within secondary metabolite biosynthesis. Functionally, O-methyltransferase; part of the gene cluster that mediates the biosynthesis of hypothemycin, a resorcylic acid lactone (RAL) that irreversibly inhibits a subset of protein kinases with a conserved cysteine in the ATP binding site such as human ERK2. The first step is performed by both PKSs hmp3 and hmp8 and leads to the production of 7',8'-dehydrozearalenol (DHZ). The highly reducing PKS hpm8 synthesizes the reduced hexaketide (7S,11S,2E,8E)-7,11-dihydroxy-dodeca-2,8-dienoate, which is transferred downstream to the non-reducing PKS hpm3. Hpm3 then extends the reduced hexaketide to a nonaketide, after which regioselective cyclization and macrolactonization affords DHZ. The next step is the conversion of DHZ into aigialomycin C and is performed by the O-methyltransferase hmp5, the FAD-binding monooxygenase hmp7, and the cytochrome P450 monooxygenase hmp1. The wide substrate tolerance of the hmp5 and hmp7 implies that the reactions from DHZ to aigialomycin C can occur in any order. The steps from aigialomycin C to hypothemycin are less well established. The FAD-linked oxidoreductase hmp9 presumably catalyzes oxidation of the C-6' hydroxyl to a ketone. The timing of this oxidation is important, since the resulting enone functional group is a Michael acceptor that can react spontaneously with glutathione, an abundant metabolite in fungal cells. The glutathione S-transferase hmp2 catalyzes cis-trans isomerization of the 7',8' double bond with equilibrium favoring the trans isomer. The hpm6-encoded transporter might preferentially pump hypothemycin out of the cell relative to the trans isomer aigialomycin A. The cis-to-trans isomerization may be coupled with C-4' hydroxylation, since all known hypothemycin analogs containing the enone functional group also have hydroxyl groups at both C-4' and C-5'. This Hypomyces subiculosus (Nectria subiculosa) protein is O-methyltransferase hmp5.